We begin with the raw amino-acid sequence, 809 residues long: Plasminogen (809 aa).

The N-terminal stretch at 1 to 19 (MDHKEVVLLLLLFLKSGLG) is a signal peptide. The PAN domain maps to 20–98 (DSLDDYVNTQ…RDVVLFEKRI (79 aa)). 24 cysteine pairs are disulfide-bonded: cysteine 49/cysteine 73, cysteine 53/cysteine 61, cysteine 103/cysteine 181, cysteine 124/cysteine 164, cysteine 152/cysteine 176, cysteine 185/cysteine 262, cysteine 188/cysteine 316, cysteine 206/cysteine 245, cysteine 234/cysteine 257, cysteine 275/cysteine 352, cysteine 296/cysteine 335, cysteine 324/cysteine 347, cysteine 377/cysteine 454, cysteine 398/cysteine 437, cysteine 426/cysteine 449, cysteine 480/cysteine 559, cysteine 501/cysteine 542, cysteine 530/cysteine 554, cysteine 566/cysteine 684, cysteine 576/cysteine 584, cysteine 606/cysteine 622, cysteine 698/cysteine 765, cysteine 728/cysteine 744, and cysteine 755/cysteine 783. Kringle domains lie at 103–181 (CKTG…IPEC) and 185–262 (CMHC…IPRC). O-linked (GalNAc...) threonine glycosylation is present at threonine 268. 3 Kringle domains span residues 275-352 (CLKG…IPSC), 377-454 (CYRG…LKKC), and 480-559 (CMFG…VPQC). The N-linked (GlcNAc...) asparagine glycan is linked to asparagine 308. Residues 580 to 807 (VVGGCVSIPH…FVTWIEEIMR (228 aa)) form the Peptidase S1 domain. The residue at position 596 (serine 596) is a Phosphoserine. Residues histidine 621 and aspartate 664 each act as charge relay system in the active site. Serine 759 (charge relay system) is an active-site residue.

This sequence belongs to the peptidase S1 family. Plasminogen subfamily. As to quaternary structure, interacts with CSPG4 and AMOT. Interacts (via the Kringle domains) with HRG; the interaction tethers PLG to the cell surface and enhances its activation. Interacts (via Kringle 4 domain) with ADA; the interaction stimulates PLG activation when in complex with DPP4. Angiostatin: Interacts with ATP5F1A; the interaction inhibits most of the angiogenic effects of angiostatin. In terms of processing, N-linked glycan contains N-acetyllactosamine, sialic acid and is core fucosylated. O-linked glycans consist of Gal-GalNAc disaccharide which is modified with up to 2 sialic acid residues (microheterogeneity). In the presence of the inhibitor, the activation involves only cleavage after Arg-579, yielding two chains held together by two disulfide bonds. In the absence of the inhibitor, the activation involves additionally the removal of the activation peptide.

The protein resides in the secreted. The catalysed reaction is Preferential cleavage: Lys-|-Xaa &gt; Arg-|-Xaa, higher selectivity than trypsin. Converts fibrin into soluble products.. With respect to regulation, converted into plasmin by plasminogen activators, both plasminogen and its activator being bound to fibrin. Cannot be activated with streptokinase. Its function is as follows. Plasmin dissolves the fibrin of blood clots and acts as a proteolytic factor in a variety of other processes including embryonic development, tissue remodeling, tumor invasion, and inflammation. In ovulation, weakens the walls of the Graafian follicle. It activates the urokinase-type plasminogen activator, collagenases and several complement zymogens, such as C1, C4 and C5. Cleavage of fibronectin and laminin leads to cell detachment and apoptosis. Also cleaves fibrin, thrombospondin and von Willebrand factor. Its role in tissue remodeling and tumor invasion may be modulated by CSPG4. Binds to cells. This chain is Plasminogen (PLG), found in Sus scrofa (Pig).